A 101-amino-acid chain; its full sequence is MNIAEFHQNIEHVWQKIEEELENQGADVDCETQGSVFTITFDNRTQIVINKQEPLLELWIASKLGGFHFAFKNGEWVSNDGQRFWDCFVEACAAHGENVQF.

The protein belongs to the frataxin family.

Involved in iron-sulfur (Fe-S) cluster assembly. May act as a regulator of Fe-S biogenesis. The polypeptide is Iron-sulfur cluster assembly protein CyaY (Haemophilus influenzae (strain PittEE)).